A 237-amino-acid polypeptide reads, in one-letter code: Thrombin-like enzyme agkihpin-2 (237 aa).

Methionine 1 is a propeptide. Residues isoleucine 2–alanine 228 form the Peptidase S1 domain. Cysteine 27 and cysteine 43 are joined by a disulfide. Histidine 42 acts as the Charge relay system in catalysis. Residue asparagine 80 is glycosylated (N-linked (GlcNAc...) asparagine). Aspartate 87 serves as the catalytic Charge relay system. Intrachain disulfides connect cysteine 119/cysteine 189, cysteine 151/cysteine 168, and cysteine 179/cysteine 204. The active-site Charge relay system is serine 183.

Belongs to the peptidase S1 family. Snake venom subfamily. In terms of tissue distribution, expressed by the venom gland (at protein level). Expressed by the venom gland.

The protein localises to the secreted. The hydrolysis of TAMe (tosyl-arginine methyl ester) substrate is activated by Ca(2+), Fe(3+), Mg(2+) and Zn(2+), and inhibited by EDTA, PMSF and DTT. Thrombin-like enzyme that shows fibrinogenolytic activity against bovine fibrinogen alpha and beta chains, but not gamma chain. Hydrolyzes fibrin. Enhances ADP-induced human platelet aggregation. Has arginine esterase activity for TAMe (tosyl-arginine methyl ester) substrate. Reduces thrombin-induced thrombosis. Does not have hemorrhagic activity. Reduces the motility of human liver cancer HepG2 cells in a wound-healing assay. This Gloydius halys (Chinese water mocassin) protein is Thrombin-like enzyme agkihpin-2.